We begin with the raw amino-acid sequence, 186 residues long: MSDYMINSMQFLYLVASYLFGNILTAYIVTKWRHNVDIRDEGSGNPGARNMGRVYGKGYFVATFLGDAIKGAIVVSIAKYLFEDSTFVMLTLLAVIIGHIYPVLFKGKGGKGISTFIGGLIAFDYLIALTLVAVFIIFYLIFKGFTKPGLITIACLPLCMILYSYSIVTTILSALIIVLILYVNRE.

Transmembrane regions (helical) follow at residues 9–29 (MQFL…AYIV), 58–78 (GYFV…VSIA), 85–105 (STFV…PVLF), 121–141 (IAFD…FYLI), and 161–181 (ILYS…VLIL).

Belongs to the PlsY family. Probably interacts with PlsX.

It localises to the cell membrane. The enzyme catalyses an acyl phosphate + sn-glycerol 3-phosphate = a 1-acyl-sn-glycero-3-phosphate + phosphate. It functions in the pathway lipid metabolism; phospholipid metabolism. Catalyzes the transfer of an acyl group from acyl-phosphate (acyl-PO(4)) to glycerol-3-phosphate (G3P) to form lysophosphatidic acid (LPA). This enzyme utilizes acyl-phosphate as fatty acyl donor, but not acyl-CoA or acyl-ACP. The protein is Glycerol-3-phosphate acyltransferase 1 of Bacillus cereus (strain ZK / E33L).